The primary structure comprises 274 residues: WIMGHMVNKKYQVDEFANLGANAIEFDVTFDPNSKADYTYHKVPCDCGRTCGKYEVFTEFLSYVRNKTTPGHPSFREKLILLQLDLKMSGFSDSESNEAGKDVAKKLLNYYWNRGSNGGRAYILLSIPSIDNQLFLKGFKLQLETEGYSEYLEKVGVDFSANEDLNSILNVLGRLEEEHVWQSDGITDCLARRSTRLRDAIKKRDTGDDRYGIKKVYTWTVDYYPSIRYYLRLGIDGVMTNFPNRVEYILNEEEFSGSLRMATIDDNPWEKYVG.

Histidine 5 is a catalytic residue. The Mg(2+) site is built by glutamate 25 and aspartate 27. The active-site Nucleophile is the histidine 41. 2 disulfides stabilise this stretch: cysteine 45-cysteine 51 and cysteine 47-cysteine 189. N-linked (GlcNAc...) asparagine glycosylation is present at asparagine 66. Aspartate 85 is a binding site for Mg(2+).

Belongs to the arthropod phospholipase D family. Class II subfamily. Requires Mg(2+) as cofactor. As to expression, expressed by the venom gland.

It is found in the secreted. It carries out the reaction an N-(acyl)-sphingosylphosphocholine = an N-(acyl)-sphingosyl-1,3-cyclic phosphate + choline. The enzyme catalyses an N-(acyl)-sphingosylphosphoethanolamine = an N-(acyl)-sphingosyl-1,3-cyclic phosphate + ethanolamine. The catalysed reaction is a 1-acyl-sn-glycero-3-phosphocholine = a 1-acyl-sn-glycero-2,3-cyclic phosphate + choline. It catalyses the reaction a 1-acyl-sn-glycero-3-phosphoethanolamine = a 1-acyl-sn-glycero-2,3-cyclic phosphate + ethanolamine. Dermonecrotic toxins cleave the phosphodiester linkage between the phosphate and headgroup of certain phospholipids (sphingolipid and lysolipid substrates), forming an alcohol (often choline) and a cyclic phosphate. This toxin acts on sphingomyelin (SM). It may also act on ceramide phosphoethanolamine (CPE), lysophosphatidylcholine (LPC) and lysophosphatidylethanolamine (LPE), but not on lysophosphatidylserine (LPS), and lysophosphatidylglycerol (LPG). It acts by transphosphatidylation, releasing exclusively cyclic phosphate products as second products. Induces dermonecrosis, hemolysis, increased vascular permeability, edema, inflammatory response, and platelet aggregation. The sequence is that of Dermonecrotic toxin LspiSicTox-betaIII1 G from Loxosceles spinulosa (Recluse spider).